The chain runs to 311 residues: MKVAVLGAAGGIGQALALLLKNRLPAGSELSLYDIAPVTPGVAVDLSHIPTDVKVKGFCGEDPSPALVGADVVLISAGVARKPGMDRSDLFNINAGIVKNLVEKCAASCPKALIGIITNPVNTTVAIAAEVLKKAGVYDKRRLFGVTTLDVIRAETFVAEAKGLNVDKVRVNVIGGHSGVTILPLLSQIEGASFTADEVAAMTKRIQNAGTEVVEAKAGGGSATLSMGQAACRFGLSLIKGLQGEANVIECAYVEGDGKHATFFAQPILLGKNGVETVLDYGKLSAFEQEAMDGMLATLKADIQLGVEFVK.

NAD(+) is bound by residues 7–13 (GAAGGIG) and aspartate 34. The substrate site is built by arginine 81 and arginine 87. NAD(+) is bound by residues asparagine 94 and 117-119 (ITN). Positions 119 and 153 each coordinate substrate. Catalysis depends on histidine 177, which acts as the Proton acceptor. Methionine 227 contacts NAD(+).

This sequence belongs to the LDH/MDH superfamily. MDH type 1 family. Homodimer.

The enzyme catalyses (S)-malate + NAD(+) = oxaloacetate + NADH + H(+). Its function is as follows. Catalyzes the reversible oxidation of malate to oxaloacetate. The polypeptide is Malate dehydrogenase (Aeromonas hydrophila subsp. hydrophila (strain ATCC 7966 / DSM 30187 / BCRC 13018 / CCUG 14551 / JCM 1027 / KCTC 2358 / NCIMB 9240 / NCTC 8049)).